A 227-amino-acid chain; its full sequence is MGGKQSTAARSRGPFPGVSTDDSAVPPPGGAPHFGHYRAGGGAMGLRSRSVSSVAGMGMDPSSAGGVSFGLYTPASRGAGDAERAPGSGGSASDSTYAHGNGYQETGGGHHRDGMLYLGSRASLADALPLHIAPRWFSSHSGFKCPICSKSVASDEMEMHFIMCLSKPRLSYNDDVLTKDAGECVICLEELLQGDTIARLPCLCIYHKSCIDSWFEVNRSCPEHPAD.

Positions 1 to 38 (MGGKQSTAARSRGPFPGVSTDDSAVPPPGGAPHFGHYR) are disordered. Gly2 carries the N-myristoyl glycine lipid modification. Positions 2–10 (GGKQSTAAR) are required for endosomal and lysosomal localization and myristoylation. Phosphoserine occurs at positions 50, 52, and 53. The disordered stretch occupies residues 77 to 105 (RGAGDAERAPGSGGSASDSTYAHGNGYQE). At Tyr103 the chain carries Phosphotyrosine. Ser123 carries the phosphoserine modification. An RING-type; atypical zinc finger spans residues 184-225 (CVICLEELLQGDTIARLPCLCIYHKSCIDSWFEVNRSCPEHP).

As to quaternary structure, interacts with AKT1, GLUL and TUBB2A. Interacts with ZNRF2. Interacts (via its RING domain) with UBE2N. Interacts (when phosphorylated) with YWHAE. N-myristoylation targets ZNRF1 to intracellular membranes. Post-translationally, phosphorylated by SRC at Tyr-103; leading to 'Lys-63'-linked ubiquitination of TLR3, lysosomal trafficking and degradation.

The protein localises to the endosome. Its subcellular location is the lysosome. It is found in the membrane. The protein resides in the cytoplasmic vesicle. It localises to the secretory vesicle. The protein localises to the synaptic vesicle membrane. The enzyme catalyses S-ubiquitinyl-[E2 ubiquitin-conjugating enzyme]-L-cysteine + [acceptor protein]-L-lysine = [E2 ubiquitin-conjugating enzyme]-L-cysteine + N(6)-ubiquitinyl-[acceptor protein]-L-lysine.. It functions in the pathway protein modification; protein ubiquitination. E3 ubiquitin-protein ligase that plays a role in different processes including cell differentiation, receptor recycling or regulation of inflammation. Mediates the ubiquitination of AKT1 and GLUL, thereby playing a role in neuron cells differentiation. Plays a role in the establishment and maintenance of neuronal transmission and plasticity. Regulates Schwann cells differentiation by mediating ubiquitination of GLUL. Promotes neurodegeneration by mediating 'Lys-48'-linked polyubiquitination and subsequent degradation of AKT1 in axons: degradation of AKT1 prevents AKT1-mediated phosphorylation of GSK3B, leading to GSK3B activation and phosphorylation of DPYSL2/CRMP2 followed by destabilization of microtubule assembly in axons. Ubiquitinates the Na(+)/K(+) ATPase alpha-1 subunit/ATP1A1 and thereby influences its endocytosis and/or degradation. Controls ligand-induced EGFR signaling via mediating receptor ubiquitination and recruitment of the ESCRT machinery. Acts as a negative feedback mechanism controlling TLR3 trafficking by mediating TLR3 'Lys-63'-linked polyubiquitination to reduce type I IFN production. Modulates inflammation by promoting caveolin-1/CAV1 ubiquitination and degradation to regulate TLR4-activated immune response. This Bos taurus (Bovine) protein is E3 ubiquitin-protein ligase ZNRF1 (ZNRF1).